Reading from the N-terminus, the 235-residue chain is MDIKVKDFEGPLDLLLHLVSKYEVDVYQVPIVEVIEQYLAYIETLQTMRLELAGEYMLMASQLMLIKSRRLLPKLVDKEPDEEDLEQELLGKIEEYSRFKALSQELASQHDKRALLFSKPKQELIFEQAVLQKDKTVMDLFLAFSQLMAAKQEAFKYNHTVIERDDYRIEDMMELIEARLELEQELTLTDLLKHCDHLNEAITLFLASLELIKRQLVGIEQTSHFGQIVLRKEIQ.

It belongs to the ScpA family. In terms of assembly, component of a cohesin-like complex composed of ScpA, ScpB and the Smc homodimer, in which ScpA and ScpB bind to the head domain of Smc. The presence of the three proteins is required for the association of the complex with DNA.

The protein localises to the cytoplasm. In terms of biological role, participates in chromosomal partition during cell division. May act via the formation of a condensin-like complex containing Smc and ScpB that pull DNA away from mid-cell into both cell halves. The polypeptide is Segregation and condensation protein A (Streptococcus equi subsp. zooepidemicus (strain H70)).